A 236-amino-acid polypeptide reads, in one-letter code: Phosphoribosylaminoimidazole-succinocarboxamide synthase (236 aa).

The protein belongs to the SAICAR synthetase family.

The catalysed reaction is 5-amino-1-(5-phospho-D-ribosyl)imidazole-4-carboxylate + L-aspartate + ATP = (2S)-2-[5-amino-1-(5-phospho-beta-D-ribosyl)imidazole-4-carboxamido]succinate + ADP + phosphate + 2 H(+). It functions in the pathway purine metabolism; IMP biosynthesis via de novo pathway; 5-amino-1-(5-phospho-D-ribosyl)imidazole-4-carboxamide from 5-amino-1-(5-phospho-D-ribosyl)imidazole-4-carboxylate: step 1/2. The protein is Phosphoribosylaminoimidazole-succinocarboxamide synthase of Cellvibrio japonicus (strain Ueda107) (Pseudomonas fluorescens subsp. cellulosa).